The following is a 509-amino-acid chain: Activin receptor type-1 (509 aa).

The signal sequence occupies residues 1-20 (MVDGVMILPVLIMIALPSPS). Residues 21–123 (MEDEKPKVNP…FPGTQNFHLE (103 aa)) lie on the Extracellular side of the membrane. N-linked (GlcNAc...) asparagine glycosylation occurs at N102. The helical transmembrane segment at 124–146 (VGLIILSVVFAVCLLACLLGVAL) threads the bilayer. Residues 147–509 (RKFKRRNQER…NSLDKLKTDC (363 aa)) lie on the Cytoplasmic side of the membrane. The region spanning 178-207 (STLADLLDHSCTSGSGSGLPFLVQRTVARQ) is the GS domain. The Protein kinase domain maps to 208-502 (ITLLECVGKG…KTLTKIDNSL (295 aa)). ATP-binding positions include 214–222 (VGKGRYGEV) and K235. The Proton acceptor role is filled by D336. Residue S501 is modified to Phosphoserine.

It belongs to the protein kinase superfamily. TKL Ser/Thr protein kinase family. TGFB receptor subfamily. In terms of assembly, interacts with FKBP1A. Interacts with FCHO1. Interacts with CLU. Interacts with type II receptors AMHR2 and ACVR2A. Interacts with BMP7. Interacts with GDF2/BMP9. Interacts with BMP6 (when glycosylated); the interaction may induce HAMP expression. Interacts with TSC22D1/TSC-22. Mg(2+) serves as cofactor. The cofactor is Mn(2+). Expressed in normal parenchymal cells, endothelial cells, fibroblasts and tumor-derived epithelial cells.

Its subcellular location is the membrane. It carries out the reaction L-threonyl-[receptor-protein] + ATP = O-phospho-L-threonyl-[receptor-protein] + ADP + H(+). It catalyses the reaction L-seryl-[receptor-protein] + ATP = O-phospho-L-seryl-[receptor-protein] + ADP + H(+). In terms of biological role, bone morphogenetic protein (BMP) type I receptor that is involved in a wide variety of biological processes, including bone, heart, cartilage, nervous, and reproductive system development and regulation. As a type I receptor, forms heterotetrameric receptor complexes with the type II receptors AMHR2, ACVR2A or ACVR2B. Upon binding of ligands such as BMP7 or GDF2/BMP9 to the heteromeric complexes, type II receptors transphosphorylate ACVR1 intracellular domain. In turn, ACVR1 kinase domain is activated and subsequently phosphorylates SMAD1/5/8 proteins that transduce the signal. In addition to its role in mediating BMP pathway-specific signaling, suppresses TGFbeta/activin pathway signaling by interfering with the binding of activin to its type II receptor. Besides canonical SMAD signaling, can activate non-canonical pathways such as p38 mitogen-activated protein kinases/MAPKs. May promote the expression of HAMP, potentially via its interaction with BMP6. The protein is Activin receptor type-1 (ACVR1) of Homo sapiens (Human).